We begin with the raw amino-acid sequence, 322 residues long: GDSL esterase/lipase At5g03600 (322 aa).

Residue Ser-21 is the Nucleophile of the active site. Residues Asp-295 and His-298 contribute to the active site.

The protein belongs to the 'GDSL' lipolytic enzyme family.

The sequence is that of GDSL esterase/lipase At5g03600 from Arabidopsis thaliana (Mouse-ear cress).